The chain runs to 33 residues: Brevinin-2PTd (33 aa).

Cys27 and Cys33 are disulfide-bonded.

As to expression, expressed by the skin glands.

It localises to the secreted. Its function is as follows. Has antibacterial activity against the Gram-positive bacterium S.aureus ATCC 25923 and the Gram-negative bacterium E.coli ATCC 25726. This Pulchrana picturata (Malaysian fire frog) protein is Brevinin-2PTd.